We begin with the raw amino-acid sequence, 412 residues long: Eukaryotic initiation factor 4A-2 (412 aa).

A2 carries the post-translational modification N-acetylalanine. The Q motif signature appears at E39–Q67. Residues I70 to I240 form the Helicase ATP-binding domain. A83–T90 contributes to the ATP binding site. At T145 the chain carries Phosphothreonine. The DEAD box motif lies at D188–D191. A Helicase C-terminal domain is found at G251–L412.

The protein belongs to the DEAD box helicase family. eIF4A subfamily. EIF4F is a multi-subunit complex, the composition of which varies with external and internal environmental conditions. It is composed of at least EIF4A, EIF4E and EIF4G. As to expression, ubiquitous. Preferentially expressed in flowers, young leaves and roots.

The protein resides in the cytoplasm. It catalyses the reaction ATP + H2O = ADP + phosphate + H(+). ATP-dependent RNA helicase which is a subunit of the eIF4F complex involved in cap recognition and is required for mRNA binding to ribosome. In the current model of translation initiation, eIF4A unwinds RNA secondary structures in the 5'-UTR of mRNAs which is necessary to allow efficient binding of the small ribosomal subunit, and subsequent scanning for the initiator codon. In Arabidopsis thaliana (Mouse-ear cress), this protein is Eukaryotic initiation factor 4A-2 (TIF4A-2).